Consider the following 262-residue polypeptide: Kallikrein-1 (262 aa).

Residues 1–18 form the signal peptide; the sequence is MWFLVLCLALSLGGTGAA. Positions 19-24 are cleaved as a propeptide — activation peptide; sequence PPIQSR. In terms of domain architecture, Peptidase S1 spans 25-259; the sequence is IVGGWECEQH…YVKWIEDTIA (235 aa). 5 disulfide bridges follow: Cys-31-Cys-174, Cys-50-Cys-66, Cys-153-Cys-220, Cys-185-Cys-199, and Cys-210-Cys-235. The active-site Charge relay system is the His-65. Ser-93 is a glycosylation site (O-linked (GalNAc...) serine). Residue Asn-102 is glycosylated (N-linked (GlcNAc...) asparagine). The O-linked (GalNAc...) serine glycan is linked to Ser-104. Asn-108 carries an N-linked (GlcNAc...) asparagine glycan. Asp-120 (charge relay system) is an active-site residue. Residue Asn-165 is glycosylated (N-linked (GlcNAc...) asparagine; partial). Ser-167 is a glycosylation site (O-linked (GalNAc...) serine). The active-site Charge relay system is Ser-214.

It belongs to the peptidase S1 family. Kallikrein subfamily. In terms of processing, the O-linked polysaccharides on Ser-93, Ser-104 and Ser-167 are probably the mucin type linked to GalNAc. In PubMed:3163150, GalNAc was detected with the corresponding peptides but not located. In terms of tissue distribution, isoform 2 is expressed in pancreas, salivary glands, kidney, colon, prostate gland, testis, spleen and the colon adenocarcinoma cell line T84.

It carries out the reaction Preferential cleavage of Arg-|-Xaa bonds in small molecule substrates. Highly selective action to release kallidin (lysyl-bradykinin) from kininogen involves hydrolysis of Met-|-Xaa or Leu-|-Xaa.. Glandular kallikreins cleave Met-Lys and Arg-Ser bonds in kininogen to release Lys-bradykinin. In terms of biological role, (Microbial infection) Cleaves Neisseria meningitidis NHBA in saliva; Neisseria is an obligate commensal of the nasopharyngeal mucosa. This Homo sapiens (Human) protein is Kallikrein-1 (KLK1).